Reading from the N-terminus, the 302-residue chain is Oxygen-dependent coproporphyrinogen-III oxidase (302 aa).

Position 94 (Ser94) interacts with substrate. His98 and His108 together coordinate a divalent metal cation. His108 (proton donor) is an active-site residue. Substrate is bound at residue 110 to 112 (NVR). 2 residues coordinate a divalent metal cation: His147 and His177. Positions 242–277 (YVEFNLVYDRGTLFGLQTGGRTESILMSMPPLVRWQ) are important for dimerization. Position 260–262 (260–262 (GGR)) interacts with substrate.

Belongs to the aerobic coproporphyrinogen-III oxidase family. Homodimer. A divalent metal cation is required as a cofactor.

It localises to the cytoplasm. The catalysed reaction is coproporphyrinogen III + O2 + 2 H(+) = protoporphyrinogen IX + 2 CO2 + 2 H2O. It participates in porphyrin-containing compound metabolism; protoporphyrin-IX biosynthesis; protoporphyrinogen-IX from coproporphyrinogen-III (O2 route): step 1/1. Involved in the heme biosynthesis. Catalyzes the aerobic oxidative decarboxylation of propionate groups of rings A and B of coproporphyrinogen-III to yield the vinyl groups in protoporphyrinogen-IX. This Shewanella baltica (strain OS155 / ATCC BAA-1091) protein is Oxygen-dependent coproporphyrinogen-III oxidase.